We begin with the raw amino-acid sequence, 591 residues long: Negative elongation factor D (591 aa).

The tract at residues 1–44 (MAGPAPGTIMGEDYFGNASEWGEEADGGQHQEDDSGEGEDDAEV) is disordered. Residues 34-44 (DSGEGEDDAEV) show a composition bias toward acidic residues.

Belongs to the NELF-D family. The NELF complex is composed of NELFA, NELFB, NELFCD and NELFE; NELFA and NELFCD form a stable subcomplex that binds primarily through NELFCD to the N-terminus of NELFB. Binds RNA which may help to stabilize the NELF complex on nucleic acid. In vitro, the NELFA:NELFCD subcomplex binds to ssDNA and ssRNA in a sequence- and structure-dependent manner. Interacts with ARAF1. Interacts with PCF11. Interacts with NELFB. Interacts with KAT8.

It localises to the nucleus. In terms of biological role, essential component of the NELF complex, a complex that negatively regulates the elongation of transcription by RNA polymerase II. The NELF complex, which acts via an association with the DSIF complex and causes transcriptional pausing, is counteracted by the P-TEFb kinase complex. This chain is Negative elongation factor D (Nelfcd), found in Mus musculus (Mouse).